Here is a 132-residue protein sequence, read N- to C-terminus: Small ribosomal subunit protein uS11 (132 aa).

The protein belongs to the universal ribosomal protein uS11 family. In terms of assembly, part of the 30S ribosomal subunit. Interacts with proteins S7 and S18. Binds to IF-3.

Located on the platform of the 30S subunit, it bridges several disparate RNA helices of the 16S rRNA. Forms part of the Shine-Dalgarno cleft in the 70S ribosome. The polypeptide is Small ribosomal subunit protein uS11 (Legionella pneumophila (strain Corby)).